We begin with the raw amino-acid sequence, 451 residues long: Pre-mRNA-splicing factor PRP46 (451 aa).

WD repeat units follow at residues 137–168 (GHLG…KVWD), 180–210 (GHVM…KCWD), 222–252 (GHLS…KLWD), 264–294 (GHKG…RLWD), 306–335 (HHKR…RSWG), 348–377 (EKTG…SFYD), and 397–427 (EGER…KIWK).

The protein belongs to the WD repeat PRL1/PRL2 family. As to quaternary structure, belongs to the CWC complex (or CEF1-associated complex), a spliceosome subcomplex composed of the U2, U5 and U6 snRNAs and at least BUD13, BUD31, BRR2, CDC40, CEF1, CLF1, CUS1, CWC2, CWC15, CWC21, CWC22, CWC23, CWC24, CWC25, CWC27, ECM2, HSH155, IST3, ISY1, LEA1, MSL1, NTC20, PRP8, PRP9, PRP11, PRP19, PRP21, PRP22, PRP45, PRP46, SLU7, SMB1, SMD1, SMD2, SMD3, SMX2, SMX3, SNT309, SNU114, SPP2, SYF1, SYF2, RSE1 and YJU2. Interacts with CEF1, CLF1, NTC20, PRP45 and SYF1.

The protein resides in the cytoplasm. It is found in the nucleus. Its function is as follows. Involved in pre-mRNA splicing. May also be required for cell cycle progression at G2/M. The sequence is that of Pre-mRNA-splicing factor PRP46 (PRP46) from Saccharomyces cerevisiae (strain ATCC 204508 / S288c) (Baker's yeast).